Reading from the N-terminus, the 314-residue chain is Oxidoreductase poxI (314 aa).

It belongs to the NmrA-type oxidoreductase family. Isoflavone reductase subfamily.

It participates in secondary metabolite biosynthesis. Functionally, oxidoreductase; part of the gene cluster that mediates the biosynthesis of oxaleimides, cytotoxic compounds containing an unusual disubstituted succinimide moiety. The first step of the pathway is provided by the HR-PKS poxF that serves in a new mode of collaborative biosynthesis with the PKS-NRPS poxE, by providing the olefin containing amino acid substrate via the synthesis of an ACP-bound dec-4-enoate. The cytochrome P450 monooxygenase poxM-catalyzed oxidation at the alpha-position creates the enzyme-bound 2-hydroxydec-4-enoyl-ACP thioester, which may be prone to spontaneous hydrolysis to yield 2-hydroxydec-4-enoic acid due to increased electrophilicity of the carbonyl. 2-hydroxydec-4-enoic acid can then be further oxidized by poxM to yield the alpha-ketoacid 2-oxodec-4-enoicacid, which is reductively aminated by the aminotransferase poxL to yield (S,E)-2-aminodec-4-enoic acid. The Hybrid PKS-NRPS synthetase poxE then performs condensation between the octaketide product of its PKS modules and the amino group of (S,E)-2-aminodec-4-enoic acid which is activated and incorporated by the adenylation domain. The resulting aminoacyl product can be cyclized by the Diels-Alderase PoxQ and reductively released by the reductive (R) domain of poxE to yield an aldehyde intermediate. The released aldehyde is then substrate for a Knoevenagel condensation by the hydrolyase poxO followed by an oxidation at the 5-position of the pyrrolidone ring. The presence of the olefin from the amino acid building block allows for migration of the substituted allyl group to occur. This allylic transposition reaction takes place in a conjugate addition, semipinacol-like fashion to yield a succinimide intermediate. Iterative two-electron oxidations of the C7 methyl of the succinimide intermediate to the carboxylic acid can be catalyzed by one of two remaining cytochrome P450 monooxygenasess poxC or poxD to yield oxaleimide A. Subsequent oxidation yields the maleimide scaffold oxaleimide I. Both oxaleimide A and oxaleimide I can undergo oxidative modifications in the decalin ring to yield the series of products oxaleimides B to H. This chain is Oxidoreductase poxI, found in Penicillium oxalicum (strain 114-2 / CGMCC 5302) (Penicillium decumbens).